The following is a 158-amino-acid chain: 2-C-methyl-D-erythritol 2,4-cyclodiphosphate synthase (158 aa).

A divalent metal cation-binding residues include D9 and H11. 4-CDP-2-C-methyl-D-erythritol 2-phosphate contacts are provided by residues 9 to 11 and 35 to 36; these read DVH and HS. Residue H43 coordinates a divalent metal cation. Residues 57–59, 62–66, 101–107, 133–136, F140, and R143 each bind 4-CDP-2-C-methyl-D-erythritol 2-phosphate; these read DIG, FPDTD, AQKPKMA, and TTTE.

The protein belongs to the IspF family. As to quaternary structure, homotrimer. Requires a divalent metal cation as cofactor.

It carries out the reaction 4-CDP-2-C-methyl-D-erythritol 2-phosphate = 2-C-methyl-D-erythritol 2,4-cyclic diphosphate + CMP. It participates in isoprenoid biosynthesis; isopentenyl diphosphate biosynthesis via DXP pathway; isopentenyl diphosphate from 1-deoxy-D-xylulose 5-phosphate: step 4/6. Involved in the biosynthesis of isopentenyl diphosphate (IPP) and dimethylallyl diphosphate (DMAPP), two major building blocks of isoprenoid compounds. Catalyzes the conversion of 4-diphosphocytidyl-2-C-methyl-D-erythritol 2-phosphate (CDP-ME2P) to 2-C-methyl-D-erythritol 2,4-cyclodiphosphate (ME-CPP) with a corresponding release of cytidine 5-monophosphate (CMP). The sequence is that of 2-C-methyl-D-erythritol 2,4-cyclodiphosphate synthase from Bacillus cereus (strain B4264).